We begin with the raw amino-acid sequence, 737 residues long: Protein bicaudal D homolog (737 aa).

Coiled coils occupy residues 1–255 (MAES…RNAE), 292–319 (GSSDVKVRELEAAKEGLQEELKSREKIF), and 547–684 (AENE…DRDR). A disordered region spans residues 72-97 (YRSQHQRSTRSELENEESLLEESSAK). The segment at 686-737 (VFKRSSTRAPTRETYQPPRAVRYPGSTTTAQQPAPSSSGGSRGGPRRGDNQQ) is disordered. Residues 710–719 (GSTTTAQQPA) show a composition bias toward polar residues.

The protein belongs to the BicD family. Component of a dynein-regulating complex composed of at least bicd-1, dlc-1 and egal-1. Interacts with egal-1 and unc-83. As to expression, expressed in the excretory cell, body wall muscles, vulval muscle cells, PVD and FLP sensory neurons and AVF interneurons.

The protein localises to the nucleus envelope. Its subcellular location is the perikaryon. It localises to the cell projection. It is found in the dendrite. Functionally, part of a complex with dlc-1 and egal-1, which is recruited to the nuclear envelope by unc-83, where in turn, it recruits dynein to the nuclear surface and regulates nuclear migration in hypodermal precursor cells. Required for the formation of dendritic branches of PVD sensory neurons. In Caenorhabditis elegans, this protein is Protein bicaudal D homolog.